The chain runs to 179 residues: Stathmin-2 (179 aa).

The interval 1–26 is membrane attachment; that stretch reads MAKTAMAYKEKMKELSMLSLICSCFY. Phosphoserine is present on serine 16. 2 S-palmitoyl cysteine lipidation sites follow: cysteine 22 and cysteine 24. The SLD domain occupies 38–179; the sequence is DDMEVKQINK…NKELQVELSG (142 aa). Positions 39–96 are regulatory/phosphorylation domain; sequence DMEVKQINKRASGQAFELILKPPSPISEAPRTLASPKKKDLSLEEIQKKLEAAEERRK. Phosphoserine occurs at positions 50, 62, 73, and 97. Residues 75–179 adopt a coiled-coil conformation; sequence KKKDLSLEEI…NKELQVELSG (105 aa).

This sequence belongs to the stathmin family. As to quaternary structure, interacts with MAPK8. Interacts with ITM2C. Interacts with KIFBP. Interacts (via the N-terminal region) with CIB1 (via C-terminal region); the interaction is direct, occurs in a calcium-dependent manner and attenuates the neurite outgrowth inhibition of STMN2. Sumoylated. Post-translationally, phosphorylated mostly by MAPK8, but also by MAPK9 and MAPK10 in the developing brain cortex. In terms of processing, N-terminal palmitoylation promotes specific anchoring to the cytosolic leaflet of Golgi membranes and subsequent vesicular trafficking along dendrites and axons. Neuronal Stathmins are substrates for palmitoyltransferases ZDHHC3, ZDHHC7 and ZDHHC15. As to expression, neuron specific.

The protein localises to the cytoplasm. The protein resides in the perinuclear region. It is found in the cell projection. Its subcellular location is the growth cone. It localises to the membrane. The protein localises to the axon. The protein resides in the golgi apparatus. It is found in the endosome. Its subcellular location is the lamellipodium. Regulator of microtubule stability. When phosphorylated by MAPK8, stabilizes microtubules and consequently controls neurite length in cortical neurons. In the developing brain, negatively regulates the rate of exit from multipolar stage and retards radial migration from the ventricular zone. This is Stathmin-2 (STMN2) from Homo sapiens (Human).